We begin with the raw amino-acid sequence, 295 residues long: Pyridoxal 5'-phosphate synthase subunit PdxS (295 aa).

Asp-25 lines the D-ribose 5-phosphate pocket. Lys-82 (schiff-base intermediate with D-ribose 5-phosphate) is an active-site residue. Gly-154 provides a ligand contact to D-ribose 5-phosphate. A D-glyceraldehyde 3-phosphate-binding site is contributed by Arg-166. Residues Gly-215 and 236 to 237 (GS) contribute to the D-ribose 5-phosphate site.

Belongs to the PdxS/SNZ family. In the presence of PdxT, forms a dodecamer of heterodimers.

It carries out the reaction aldehydo-D-ribose 5-phosphate + D-glyceraldehyde 3-phosphate + L-glutamine = pyridoxal 5'-phosphate + L-glutamate + phosphate + 3 H2O + H(+). It participates in cofactor biosynthesis; pyridoxal 5'-phosphate biosynthesis. Functionally, catalyzes the formation of pyridoxal 5'-phosphate from ribose 5-phosphate (RBP), glyceraldehyde 3-phosphate (G3P) and ammonia. The ammonia is provided by the PdxT subunit. Can also use ribulose 5-phosphate and dihydroxyacetone phosphate as substrates, resulting from enzyme-catalyzed isomerization of RBP and G3P, respectively. This chain is Pyridoxal 5'-phosphate synthase subunit PdxS, found in Staphylococcus aureus (strain Mu3 / ATCC 700698).